We begin with the raw amino-acid sequence, 397 residues long: Elongation factor Tu (397 aa).

The region spanning 10–206 (KPHVNIGTIG…AVDESIPDPV (197 aa)) is the tr-type G domain. The G1 stretch occupies residues 19–26 (GHVDHGKT). 19 to 26 (GHVDHGKT) provides a ligand contact to GTP. Mg(2+) is bound at residue Thr-26. The segment at 62–66 (GITIN) is G2. The tract at residues 83 to 86 (DAPG) is G3. Residues 83-87 (DAPGH) and 138-141 (NKSD) contribute to the GTP site. The tract at residues 138 to 141 (NKSD) is G4. A G5 region spans residues 176–178 (SAL).

The protein belongs to the TRAFAC class translation factor GTPase superfamily. Classic translation factor GTPase family. EF-Tu/EF-1A subfamily. As to quaternary structure, monomer.

It localises to the cytoplasm. The catalysed reaction is GTP + H2O = GDP + phosphate + H(+). Functionally, GTP hydrolase that promotes the GTP-dependent binding of aminoacyl-tRNA to the A-site of ribosomes during protein biosynthesis. This is Elongation factor Tu from Mycobacteroides abscessus (strain ATCC 19977 / DSM 44196 / CCUG 20993 / CIP 104536 / JCM 13569 / NCTC 13031 / TMC 1543 / L948) (Mycobacterium abscessus).